The primary structure comprises 508 residues: Hydroxymethylglutaryl-CoA synthase, mitochondrial (508 aa).

Residues 1-37 (MQRLLTPVRQVLRVKRAMQEASFMPPLLPPAAHQRFS) constitute a mitochondrion transit peptide. At Lys-52 the chain carries N6-succinyllysine. (3S)-3-hydroxy-3-methylglutaryl-CoA-binding residues include Glu-80 and Ala-81. The active-site Proton donor/acceptor is Glu-132. Positions 166, 204, and 208 each coordinate (3S)-3-hydroxy-3-methylglutaryl-CoA. Catalysis depends on Cys-166, which acts as the Acyl-thioester intermediate. N6-acetyllysine is present on Lys-243. Lys-256 carries the N6-acetyllysine; alternate modification. Lys-256 bears the N6-succinyllysine; alternate mark. 2 residues coordinate (3S)-3-hydroxy-3-methylglutaryl-CoA: Ser-258 and His-301. His-301 serves as the catalytic Proton donor/acceptor. Lys-306 is subject to N6-acetyllysine. (3S)-3-hydroxy-3-methylglutaryl-CoA is bound at residue Lys-310. N6-acetyllysine; alternate is present on Lys-310. Lys-310 carries the post-translational modification N6-succinyllysine; alternate. Residue Lys-333 is modified to N6-succinyllysine. Lys-342, Lys-350, Lys-354, and Lys-358 each carry N6-acetyllysine; alternate. N6-succinyllysine; alternate occurs at positions 342, 350, 354, and 358. 2 residues coordinate (3S)-3-hydroxy-3-methylglutaryl-CoA: Asn-380 and Ser-414. The residue at position 433 (Ser-433) is a Phosphoserine. At Lys-437 the chain carries N6-acetyllysine. Ser-440 and Ser-456 each carry phosphoserine. Lys-473 is modified (N6-acetyllysine; alternate). Lys-473 carries the N6-succinyllysine; alternate modification.

This sequence belongs to the thiolase-like superfamily. HMG-CoA synthase family. As to quaternary structure, homodimer. Post-translationally, succinylated. Desuccinylated by SIRT5. Succinylation, at least at Lys-310, inhibits the enzymatic activity.

The protein localises to the mitochondrion. It catalyses the reaction acetoacetyl-CoA + acetyl-CoA + H2O = (3S)-3-hydroxy-3-methylglutaryl-CoA + CoA + H(+). Its pathway is metabolic intermediate biosynthesis; (R)-mevalonate biosynthesis; (R)-mevalonate from acetyl-CoA: step 2/3. Its function is as follows. Catalyzes the first irreversible step in ketogenesis, condensing acetyl-CoA to acetoacetyl-CoA to form HMG-CoA, which is converted by HMG-CoA reductase (HMGCR) into mevalonate. The protein is Hydroxymethylglutaryl-CoA synthase, mitochondrial (HMGCS2) of Sus scrofa (Pig).